The primary structure comprises 185 residues: Ribosome maturation factor RimP (185 aa).

A disordered region spans residues 162 to 185 (VRLERAADGAPERGGDRGDTEESR).

This sequence belongs to the RimP family.

The protein resides in the cytoplasm. Functionally, required for maturation of 30S ribosomal subunits. The protein is Ribosome maturation factor RimP of Saccharopolyspora erythraea (strain ATCC 11635 / DSM 40517 / JCM 4748 / NBRC 13426 / NCIMB 8594 / NRRL 2338).